The chain runs to 1012 residues: DNA polymerase catalytic subunit (1012 aa).

Positions 1 to 31 are disordered; that stretch reads MDFFNPFIDPTRGGPRNTVRQPTPSQSPTVP. Positions 21–31 are enriched in low complexity; it reads QPTPSQSPTVP.

It belongs to the DNA polymerase type-B family. In terms of assembly, forms a complex with the ssDNA-binding protein, the DNA polymerase processivity factor, and the alkaline exonuclease. Interacts with the putative helicase-primase complex subunit; this interaction may coordinate leading and lagging strand DNA synthesis at the replication fork.

It localises to the host nucleus. It catalyses the reaction DNA(n) + a 2'-deoxyribonucleoside 5'-triphosphate = DNA(n+1) + diphosphate. The enzyme catalyses Endonucleolytic cleavage to 5'-phosphomonoester.. Functionally, replicates viral genomic DNA. The replication complex is composed of six viral proteins: the DNA polymerase, processivity factor, primase, primase-associated factor, helicase, and ssDNA-binding protein. Additionally, the polymerase contains an intrinsic ribonuclease H (RNase H) activity that specifically degrades RNA/DNA heteroduplexes or duplex DNA substrates in the 5' to 3' direction. Therefore, it can catalyze the excision of the RNA primers that initiate the synthesis of Okazaki fragments at a replication fork during viral DNA replication. This is DNA polymerase catalytic subunit (ORF9) from Human herpesvirus 8 type P (isolate GK18) (HHV-8).